The following is a 335-amino-acid chain: Ketol-acid reductoisomerase (NADP(+)) (335 aa).

The KARI N-terminal Rossmann domain occupies 2-182; the sequence is VEMFYDKDAD…GCTRAGVIET (181 aa). NADP(+)-binding positions include 25–28, Arg-48, Ser-51, and 83–86; these read YGSQ and DEIQ. The active site involves His-108. Gly-134 serves as a coordination point for NADP(+). Residues 183-328 enclose the KARI C-terminal knotted domain; it reads TFREETETDL…KKLRAMMPWL (146 aa). Mg(2+)-binding residues include Asp-191, Glu-195, Glu-227, and Glu-231. Ser-252 is a binding site for substrate.

Belongs to the ketol-acid reductoisomerase family. It depends on Mg(2+) as a cofactor.

The catalysed reaction is (2R)-2,3-dihydroxy-3-methylbutanoate + NADP(+) = (2S)-2-acetolactate + NADPH + H(+). It catalyses the reaction (2R,3R)-2,3-dihydroxy-3-methylpentanoate + NADP(+) = (S)-2-ethyl-2-hydroxy-3-oxobutanoate + NADPH + H(+). It participates in amino-acid biosynthesis; L-isoleucine biosynthesis; L-isoleucine from 2-oxobutanoate: step 2/4. It functions in the pathway amino-acid biosynthesis; L-valine biosynthesis; L-valine from pyruvate: step 2/4. Functionally, involved in the biosynthesis of branched-chain amino acids (BCAA). Catalyzes an alkyl-migration followed by a ketol-acid reduction of (S)-2-acetolactate (S2AL) to yield (R)-2,3-dihydroxy-isovalerate. In the isomerase reaction, S2AL is rearranged via a Mg-dependent methyl migration to produce 3-hydroxy-3-methyl-2-ketobutyrate (HMKB). In the reductase reaction, this 2-ketoacid undergoes a metal-dependent reduction by NADPH to yield (R)-2,3-dihydroxy-isovalerate. The chain is Ketol-acid reductoisomerase (NADP(+)) from Methanococcoides burtonii (strain DSM 6242 / NBRC 107633 / OCM 468 / ACE-M).